Here is a 697-residue protein sequence, read N- to C-terminus: Gametogenetin-binding protein 2 (697 aa).

Position 360 is a phosphoserine (serine 360).

Interacts with GGN. In terms of tissue distribution, expressed in heart, brain, placenta, lung, liver, skeletal muscle, kidney and pancreas. Expressed more abundantly in heart, pancreas and skeletal muscle.

It is found in the cytoplasmic vesicle. In terms of biological role, may be involved in spermatogenesis. In Homo sapiens (Human), this protein is Gametogenetin-binding protein 2 (GGNBP2).